A 66-amino-acid chain; its full sequence is DNA gyrase inhibitor YacG (66 aa).

The Zn(2+) site is built by Cys10, Cys13, Cys29, and Cys33.

It belongs to the DNA gyrase inhibitor YacG family. As to quaternary structure, interacts with GyrB. Zn(2+) is required as a cofactor.

Functionally, inhibits all the catalytic activities of DNA gyrase by preventing its interaction with DNA. Acts by binding directly to the C-terminal domain of GyrB, which probably disrupts DNA binding by the gyrase. This Edwardsiella ictaluri (strain 93-146) protein is DNA gyrase inhibitor YacG.